The following is a 270-amino-acid chain: Large ribosomal subunit protein bL21m (270 aa).

The N-terminal 68 residues, 1-68 (MASLRCFREL…HWYRSQDRCF (68 aa)), are a transit peptide targeting the mitochondrion. The segment at 68 to 113 (FSSNTKDTDEDEESSEGEDDDEEEGEDFEDSADMEVEREYSPAEKV) is disordered. Positions 75-101 (TDEDEESSEGEDDDEEEGEDFEDSADM) are enriched in acidic residues. Residues 102 to 113 (EVEREYSPAEKV) show a composition bias toward basic and acidic residues.

Belongs to the bacterial ribosomal protein bL21 family. As to quaternary structure, component of the mitochondrial ribosome large subunit. As to expression, constitutively expressed in roots, stems, leaves, flowers, pistils and siliques.

It is found in the mitochondrion. Its function is as follows. This protein binds to 23S ribosomal RNA in the presence of protein L20. Required for karyogamy during female gametophyte development, when the two polar nuclei fuse to form the diploid central cell nucleus, and during double fertilization of the egg cell and the central cell. This chain is Large ribosomal subunit protein bL21m, found in Arabidopsis thaliana (Mouse-ear cress).